We begin with the raw amino-acid sequence, 461 residues long: E3 ubiquitin-protein ligase TRIM15 (461 aa).

An RING-type zinc finger spans residues 12-57; it reads CSDCQGRLEDAVTAACGHTFCRLCLPLPPQMGAQPSSRVLLCPVCQ. A B box-type zinc finger spans residues 74–115; sequence LGETYCEEHGEKIYFFCENDAEFLCVFCREGPSHQAHAVGFL. Cys79, His82, Cys101, and His107 together coordinate Zn(2+). Positions 123-230 form a coiled coil; sequence RDRLRGRLEA…EKCQQPASEL (108 aa). In terms of domain architecture, B30.2/SPRY spans 272-461; it reads EMLRAFSENL…KKGSCLTLKG (190 aa).

The protein belongs to the TRIM/RBCC family. In terms of assembly, interacts with paxillin/PXN; this interaction recruits TRIM15 to focal adhesions. Interacts with TRIM8; this interaction prevents TRIM8 cytoplasmic translocation.

Its subcellular location is the cytoplasm. The protein localises to the nucleus. The protein resides in the cell junction. It localises to the focal adhesion. It catalyses the reaction S-ubiquitinyl-[E2 ubiquitin-conjugating enzyme]-L-cysteine + [acceptor protein]-L-lysine = [E2 ubiquitin-conjugating enzyme]-L-cysteine + N(6)-ubiquitinyl-[acceptor protein]-L-lysine.. Its function is as follows. E3 ubiquitin ligase that plays a role in several processes including innate antiviral immnity, cell migration and chemotaxis. Acts as a 'Lys-63'-specific ubiquitin ligase for MAPK1/ERK2 and MAPK3/ERK1, promoting their activation by facilitating their interaction with MAP2K1 and MAP2K2. Also plays a role in cell migration and chemotaxis by acting as a stable focal adhesion component upon recruitment by multi-adapter protein paxillin/PXN. Functions in the RIGI-mediated interferon induction pathway upstream or at the level of MAVS. Inhibits NF-kappa-B activation by turnover of 'Lys-63'-linked ubiquitination of MAP3K7/TAK1. Mechanistically, prevents TRIM8 cytoplasmic translocation and thus inhibits TRIM8-mediated 'Lys-63'-linked polyubiquitination of MAP3K7/TAK1 in the cytoplasm. Also has an important regulatory effect on the activation of hepatic stellate cells (HSCs). The chain is E3 ubiquitin-protein ligase TRIM15 (TRIM15) from Sus scrofa (Pig).